The chain runs to 271 residues: ATP synthase subunit a (271 aa).

Helical transmembrane passes span 40-60 (TINI…LVLF), 100-120 (LIAP…LMDL), 146-166 (DVNV…FYSI), 220-240 (LIFI…LNVP), and 242-262 (AIFH…LTIV).

It belongs to the ATPase A chain family. As to quaternary structure, F-type ATPases have 2 components, CF(1) - the catalytic core - and CF(0) - the membrane proton channel. CF(1) has five subunits: alpha(3), beta(3), gamma(1), delta(1), epsilon(1). CF(0) has three main subunits: a(1), b(2) and c(9-12). The alpha and beta chains form an alternating ring which encloses part of the gamma chain. CF(1) is attached to CF(0) by a central stalk formed by the gamma and epsilon chains, while a peripheral stalk is formed by the delta and b chains.

The protein resides in the cell inner membrane. Functionally, key component of the proton channel; it plays a direct role in the translocation of protons across the membrane. This chain is ATP synthase subunit a, found in Escherichia coli O1:K1 / APEC.